The following is a 127-amino-acid chain: Small ribosomal subunit protein uS12 (127 aa).

The residue at position 89 (Asp-89) is a 3-methylthioaspartic acid. The interval 101-127 is disordered; sequence ALDTSGVAGRTQRRSKYGAKRPKEAKK. Over residues 111-127 the composition is skewed to basic residues; the sequence is TQRRSKYGAKRPKEAKK.

Belongs to the universal ribosomal protein uS12 family. Part of the 30S ribosomal subunit. Contacts proteins S8 and S17. May interact with IF1 in the 30S initiation complex.

With S4 and S5 plays an important role in translational accuracy. Its function is as follows. Interacts with and stabilizes bases of the 16S rRNA that are involved in tRNA selection in the A site and with the mRNA backbone. Located at the interface of the 30S and 50S subunits, it traverses the body of the 30S subunit contacting proteins on the other side and probably holding the rRNA structure together. The combined cluster of proteins S8, S12 and S17 appears to hold together the shoulder and platform of the 30S subunit. This is Small ribosomal subunit protein uS12 from Flavobacterium johnsoniae (strain ATCC 17061 / DSM 2064 / JCM 8514 / BCRC 14874 / CCUG 350202 / NBRC 14942 / NCIMB 11054 / UW101) (Cytophaga johnsonae).